Here is a 539-residue protein sequence, read N- to C-terminus: Alpha-aminoadipic semialdehyde dehydrogenase (539 aa).

A mitochondrion-targeting transit peptide spans 1 to 26 (MLRLARPLCVQTVKASKLSRLWSRPA). K86, K94, and K97 each carry N6-acetyllysine; alternate. N6-succinyllysine; alternate is present on residues K86, K94, and K97. Residues 192-194 (TAF), K218, 258-259 (GT), 274-275 (GS), 274-279 (GSTQVG), and 296-297 (EL) each bind NAD(+). Residue E296 is the Proton acceptor of the active site. The active-site Nucleophile is C330. Residue T331 coordinates (S)-2-amino-6-oxohexanoate. NAD(+) is bound at residue E427. An N6-acetyllysine modification is found at K462. Positions 489 and 490 each coordinate (S)-2-amino-6-oxohexanoate. K500 is modified (N6-acetyllysine). K537 carries the N6-succinyllysine modification.

Belongs to the aldehyde dehydrogenase family. Homotetramer. Abundant in kidney, liver, cochlea and outer hair cells but not inner hair cells or vestibular type I hair cells. Very low levels in lung, brain, intestine and pancreas.

The protein localises to the cytoplasm. It localises to the cytosol. The protein resides in the nucleus. Its subcellular location is the mitochondrion. The enzyme catalyses nonanal + NAD(+) + H2O = nonanoate + NADH + 2 H(+). The catalysed reaction is (S)-2-amino-6-oxohexanoate + NAD(+) + H2O = L-2-aminoadipate + NADH + 2 H(+). It catalyses the reaction betaine aldehyde + NAD(+) + H2O = glycine betaine + NADH + 2 H(+). It carries out the reaction an aldehyde + NAD(+) + H2O = a carboxylate + NADH + 2 H(+). The enzyme catalyses hexanal + NAD(+) + H2O = hexanoate + NADH + 2 H(+). The catalysed reaction is octanal + NAD(+) + H2O = octanoate + NADH + 2 H(+). It catalyses the reaction (E)-non-2-enal + NAD(+) + H2O = (E)-non-2-enoate + NADH + 2 H(+). It carries out the reaction (E)-4-hydroxynon-2-enal + NAD(+) + H2O = (E)-4-hydroxynon-2-enoate + NADH + 2 H(+). It functions in the pathway amine and polyamine biosynthesis; betaine biosynthesis via choline pathway; betaine from betaine aldehyde: step 1/1. Functionally, multifunctional enzyme mediating important protective effects. Metabolizes betaine aldehyde to betaine, an important cellular osmolyte and methyl donor. Protects cells from oxidative stress by metabolizing a number of lipid peroxidation-derived aldehydes. Involved in lysine catabolism. The polypeptide is Alpha-aminoadipic semialdehyde dehydrogenase (Rattus norvegicus (Rat)).